We begin with the raw amino-acid sequence, 532 residues long: Putative cysteine desulfurase PbSufS (532 aa).

The signal sequence occupies residues 1–18 (MNNESICILLLLFVKITS). N6-(pyridoxal phosphate)lysine is present on lysine 286. Cysteine 480 acts as the Cysteine persulfide intermediate in catalysis.

The protein belongs to the class-V pyridoxal-phosphate-dependent aminotransferase family. Csd subfamily. As to quaternary structure, monomer. Interacts with SufE; interaction enhances cysteine desulfurase activity of SufS. Requires pyridoxal 5'-phosphate as cofactor.

It is found in the plastid. It localises to the apicoplast. It catalyses the reaction (sulfur carrier)-H + L-cysteine = (sulfur carrier)-SH + L-alanine. It participates in cofactor biosynthesis; iron-sulfur cluster biosynthesis. In terms of biological role, catalyzes sulfur activation and mobilization in sulfur mobilization (SUF) pathway for iron-sulfur (Fe-S) cluster biogenesis. Active when in complex with a partner protein SufE. Required for apicoplast maintenance. Plays a role in the development of sporozoites in oocysts in mosquitoes. This is Putative cysteine desulfurase PbSufS from Plasmodium berghei (strain Anka).